The primary structure comprises 129 residues: Large ribosomal subunit protein bL12c (129 aa).

Belongs to the bacterial ribosomal protein bL12 family. As to quaternary structure, homodimer. Part of the ribosomal stalk of the 50S ribosomal subunit. Forms a multimeric L10(L12)X complex, where L10 forms an elongated spine to which 2 to 4 L12 dimers bind in a sequential fashion. Binds GTP-bound translation factors.

It is found in the plastid. It localises to the chloroplast. In terms of biological role, forms part of the ribosomal stalk which helps the ribosome interact with GTP-bound translation factors. Is thus essential for accurate translation. This is Large ribosomal subunit protein bL12c from Oltmannsiellopsis viridis (Marine flagellate).